A 366-amino-acid chain; its full sequence is Inositol 2-dehydrogenase (366 aa).

It belongs to the Gfo/Idh/MocA family. In terms of assembly, homotetramer.

The enzyme catalyses myo-inositol + NAD(+) = scyllo-inosose + NADH + H(+). In terms of biological role, involved in the oxidation of myo-inositol (MI) to 2-keto-myo-inositol (2KMI or 2-inosose). This chain is Inositol 2-dehydrogenase, found in Rhodococcus jostii (strain RHA1).